The chain runs to 553 residues: Chaperonin GroEL (553 aa).

ATP is bound by residues 30–33, Lys-51, 87–91, Gly-415, and Asp-495; these read TLGP and DGTTT.

The protein belongs to the chaperonin (HSP60) family. As to quaternary structure, forms a cylinder of 14 subunits composed of two heptameric rings stacked back-to-back. Interacts with the co-chaperonin GroES.

The protein resides in the cytoplasm. The catalysed reaction is ATP + H2O + a folded polypeptide = ADP + phosphate + an unfolded polypeptide.. Functionally, together with its co-chaperonin GroES, plays an essential role in assisting protein folding. The GroEL-GroES system forms a nano-cage that allows encapsulation of the non-native substrate proteins and provides a physical environment optimized to promote and accelerate protein folding. The polypeptide is Chaperonin GroEL (Buchnera aphidicola subsp. Tuberolachnus salignus).